The chain runs to 585 residues: 4-hydroxy-3-methylbut-2-en-1-yl diphosphate synthase (flavodoxin) (585 aa).

Residues Cys492, Cys495, Cys526, and Glu533 each contribute to the [4Fe-4S] cluster site.

The protein belongs to the IspG family. [4Fe-4S] cluster is required as a cofactor.

The catalysed reaction is (2E)-4-hydroxy-3-methylbut-2-enyl diphosphate + oxidized [flavodoxin] + H2O + 2 H(+) = 2-C-methyl-D-erythritol 2,4-cyclic diphosphate + reduced [flavodoxin]. It participates in isoprenoid biosynthesis; isopentenyl diphosphate biosynthesis via DXP pathway; isopentenyl diphosphate from 1-deoxy-D-xylulose 5-phosphate: step 5/6. Functionally, converts 2C-methyl-D-erythritol 2,4-cyclodiphosphate (ME-2,4cPP) into 1-hydroxy-2-methyl-2-(E)-butenyl 4-diphosphate. The chain is 4-hydroxy-3-methylbut-2-en-1-yl diphosphate synthase (flavodoxin) from Akkermansia muciniphila (strain ATCC BAA-835 / DSM 22959 / JCM 33894 / BCRC 81048 / CCUG 64013 / CIP 107961 / Muc).